Reading from the N-terminus, the 66-residue chain is Large ribosomal subunit protein uL29 (66 aa).

This sequence belongs to the universal ribosomal protein uL29 family.

This chain is Large ribosomal subunit protein uL29, found in Borrelia duttonii (strain Ly).